The following is a 267-amino-acid chain: Pyridoxine 5'-phosphate synthase (267 aa).

Asn8 is a binding site for 3-amino-2-oxopropyl phosphate. 1-deoxy-D-xylulose 5-phosphate is bound at residue 10 to 11 (DH). Arg19 provides a ligand contact to 3-amino-2-oxopropyl phosphate. Catalysis depends on His44, which acts as the Proton acceptor. 1-deoxy-D-xylulose 5-phosphate is bound by residues Arg46 and His51. Glu71 acts as the Proton acceptor in catalysis. 1-deoxy-D-xylulose 5-phosphate is bound at residue Thr101. The active-site Proton donor is His219. 3-amino-2-oxopropyl phosphate-binding positions include Gly220 and 241-242 (GH).

This sequence belongs to the PNP synthase family. Homooctamer; tetramer of dimers.

It is found in the cytoplasm. It catalyses the reaction 3-amino-2-oxopropyl phosphate + 1-deoxy-D-xylulose 5-phosphate = pyridoxine 5'-phosphate + phosphate + 2 H2O + H(+). Its pathway is cofactor biosynthesis; pyridoxine 5'-phosphate biosynthesis; pyridoxine 5'-phosphate from D-erythrose 4-phosphate: step 5/5. Catalyzes the complicated ring closure reaction between the two acyclic compounds 1-deoxy-D-xylulose-5-phosphate (DXP) and 3-amino-2-oxopropyl phosphate (1-amino-acetone-3-phosphate or AAP) to form pyridoxine 5'-phosphate (PNP) and inorganic phosphate. The sequence is that of Pyridoxine 5'-phosphate synthase from Helicobacter hepaticus (strain ATCC 51449 / 3B1).